The sequence spans 558 residues: FRIGIDA-like protein 3 (558 aa).

Positions Ser-9–Asp-102 form a coiled coil. The segment covering Ala-454–Glu-463 has biased composition (basic and acidic residues). The tract at residues Ala-454–Gly-494 is disordered.

The protein belongs to the Frigida family.

The protein is FRIGIDA-like protein 3 (FRL3) of Arabidopsis thaliana (Mouse-ear cress).